A 445-amino-acid chain; its full sequence is Putative MgpC-like protein MPN_464 (445 aa).

A disordered region spans residues 23 to 44; sequence STTVAVQKSDSSGSQGQGTTDN. Over residues 31-43 the composition is skewed to low complexity; the sequence is SDSSGSQGQGTTD.

The protein belongs to the MgpC family.

The polypeptide is Putative MgpC-like protein MPN_464 (Mycoplasma pneumoniae (strain ATCC 29342 / M129 / Subtype 1) (Mycoplasmoides pneumoniae)).